A 300-amino-acid polypeptide reads, in one-letter code: Cyclic nucleotide synthase CdnE01 (300 aa).

The Mg(2+) site is built by Asp63, Asp65, and Asp137.

Belongs to the CD-NTase family. E01 subfamily. Mg(2+) is required as a cofactor.

With respect to regulation, binds to and probably activated by a virus-derived, approximately 400 nucleotide RNA (called CBASS-activating bacteriophage RNA, cabRNA) that begins in the viral terminase subunit terS and extends into terL, as well as by a shorter RNA with part of the cabRNA sequence able to form a hairpin. RNA secondary and/or tertiary structure, as well as viral infection itself, are important for CdnE activation. In terms of biological role, cyclic nucleotide synthase (second messenger synthase) of a CBASS antivirus system. CBASS (cyclic oligonucleotide-based antiphage signaling system) provides immunity against bacteriophage. The CD-NTase protein synthesizes cyclic nucleotides in response to infection; these serve as specific second messenger signals. The signals activate a diverse range of effectors, leading to bacterial cell death and thus abortive phage infection. A type I-B CBASS system. Its function is as follows. Protects S.aureus against phage infection. When the CBASS operon (cdnE and the following gene) is introduced in S.aureus strain RN4220 there is strong protection against lytic DNA phages 80alpha-vir and phi-NM1-gamma-6 but little to no protection against phages phi-NM4-gamma-4 or phi-12-gamma-3. The chain is Cyclic nucleotide synthase CdnE01 from Staphylococcus haemolyticus.